Consider the following 721-residue polypeptide: MDSSFKRASFKLPPGVNIDNINEMNNNNMNTAPAPAPAPIPTPQPTTTTTTAPQRKVTFGSRVRAQEINATPTPTTPAPAPTTTPSENDTAKKDDFDFDPVPVSRPRATRAATMIPSNMLGDKRPIRPLGKGFIGADRQTPKPETDNNNNGNNNNNNNNNDNNNNNNNNDDDDEDEDDDEYSNVSAPSWNSVLSKAKTNTMNSRKRSGMIHDFVDVNIKNDSGGENSANTTSEDGSSSRRGTLRKAIVIGTHNPQPQQEDDVEETTSRISSLDLANVQRPRPQYHTIDPASIPQWKKNNEDLVNTMEQQQQQPQQPQQPQQQQSTVGGLFNSILKKQPNNNANNAQRLTRAEAEYNEYLTKSKSQRFPEIEALNFIYPAGKDNLGRTIIVIIASHLPVREMDMERVLLYTISIMDPVVEEEYVLVYVHTNMNNSNKPSMAWMKKVYTIFNRKYKKNLKGLYIVHPTTWIKFTLGIFKHFLSSKFWKKLTYIDDLGELFKTFPREQLALPNAIMMHRPAGKKSQPIFGAPLEDVINRPDNPGEIPVLFEKGIAYLSRRGLQVEGLFRLSGANSQIKSLRQGFDQGEDVDLEDVEDVHTVAGLLKLYLRELPSPLFPFDLYSSFIEISKGEQTKPQKVESLKLLLSLLPPANKALSKHLFKFLGKVIENSSVNKMNSVNLSIVFAPNLLKDKEGNVMDAVADAQFVNQVVQLILDNINILFNY.

The tract at residues 1 to 325 (MDSSFKRASF…PQQPQQQQST (325 aa)) is disordered. The segment covering 17–33 (NIDNINEMNNNNMNTAP) has biased composition (low complexity). Over residues 34–44 (APAPAPIPTPQ) the composition is skewed to pro residues. Residues 146 to 168 (DNNNNGNNNNNNNNNDNNNNNNN) are compositionally biased toward low complexity. The span at 169 to 181 (NDDDDEDEDDDEY) shows a compositional bias: acidic residues. Polar residues-rich tracts occupy residues 182 to 202 (SNVS…NTMN) and 219 to 240 (KNDS…SSRR). Positions 308 to 323 (QQQQQPQQPQQPQQQQ) are enriched in low complexity. Positions 363–520 (KSQRFPEIEA…AIMMHRPAGK (158 aa)) constitute a CRAL-TRIO domain. A Rho-GAP domain is found at 528–719 (APLEDVINRP…LILDNINILF (192 aa)).

The protein resides in the cytoplasm. Functionally, rho GTPase-activating protein involved in the signal transduction pathway. The chain is Rho GTPase-activating protein gacY (gacY) from Dictyostelium discoideum (Social amoeba).